Reading from the N-terminus, the 158-residue chain is Transcriptional regulator MraZ (158 aa).

SpoVT-AbrB domains are found at residues 7-66 (KEQH…EPSV) and 95-138 (LDCV…APEK).

Belongs to the MraZ family. In terms of assembly, forms oligomers.

Its subcellular location is the cytoplasm. It is found in the nucleoid. The protein is Transcriptional regulator MraZ of Prosthecochloris aestuarii (strain DSM 271 / SK 413).